The sequence spans 548 residues: Membrane-associated tyrosine- and threonine-specific cdc2-inhibitory kinase (548 aa).

The interval Pro-61–Leu-89 is disordered. Residues Lys-63–Pro-85 show a composition bias toward polar residues. The 251-residue stretch at Phe-103 to Ile-353 folds into the Protein kinase domain. ATP-binding positions include Leu-109–Val-117 and Lys-132. The active-site Proton acceptor is the Asp-226. Mg(2+)-binding residues include Asn-231, Asp-244, and Gly-246. Residues Val-376 to Asn-392 carry the Membrane-association motif motif. The interval Ser-464–Phe-523 is disordered. Polar residues predominate over residues Ser-472–Asn-481. Thr-478 is subject to Phosphothreonine; by CDK1. Residues Ser-507–Ser-521 show a composition bias toward low complexity.

Belongs to the protein kinase superfamily. Ser/Thr protein kinase family. WEE1 subfamily. In terms of assembly, interacts with CDC2-CCNB1 complex. Interacts with Mos during oocyte maturation. Autophosphorylated. Phosphorylated on undefined residues by RSK2 and Mos kinases. Phosphorylation at Thr-478 by cdk1 creates a docking site for plk1/plx1, leading to subsequent phosphorylation by plk1/plk1 and inhibition of the protein kinase activity kinase activity.

It localises to the endoplasmic reticulum membrane. The protein localises to the golgi apparatus membrane. It catalyses the reaction L-seryl-[protein] + ATP = O-phospho-L-seryl-[protein] + ADP + H(+). It carries out the reaction L-threonyl-[protein] + ATP = O-phospho-L-threonyl-[protein] + ADP + H(+). With respect to regulation, negatively regulated by hyperphosphorylation during mitosis. The plk1/plk1 protein kinase may be required for mitotic phosphorylation. Inactivated during oocyte maturation by phosphorylation by RSK2 and Mos kinase. Its function is as follows. Acts as a negative regulator of entry into mitosis (G2 to M transition) by phosphorylation of the CDK1 kinase specifically when CDK1 is complexed to cyclins. Mediates phosphorylation of CDK1 predominantly on 'Thr-14'. Also involved in Golgi fragmentation. May be involved in phosphorylation of CDK1 on 'Tyr-15' to a lesser degree, however tyrosine kinase activity is unclear and may be indirect. In Xenopus laevis (African clawed frog), this protein is Membrane-associated tyrosine- and threonine-specific cdc2-inhibitory kinase (pkmyt1).